The primary structure comprises 266 residues: Pre-mRNA-splicing factor PRP11 (266 aa).

The disordered stretch occupies residues 1-21 (MNYLEGVGSKKGGGGIASESQ). The segment at 66-96 (LVCKLCNTMHMSWSSVERHLGGKKHGLNVLR) adopts a Matrin-type zinc-finger fold.

The protein belongs to the SF3A2 family. In terms of assembly, belongs to the CWC complex (or CEF1-associated complex), a spliceosome sub-complex reminiscent of a late-stage spliceosome composed of the U2, U5 and U6 snRNAs and at least BUD13, BUD31, BRR2, CDC40, CEF1, CLF1, CUS1, CWC2, CWC15, CWC21, CWC22, CWC23, CWC24, CWC25, CWC27, ECM2, HSH155, IST3, ISY1, LEA1, MSL1, NTC20, PRP8, PRP9, PRP11, PRP19, PRP21, PRP22, PRP45, PRP46, SLU7, SMB1, SMD1, SMD2, SMD3, SMX2, SMX3, SNT309, SNU114, SPP2, SYF1, SYF2, RSE1 and YJU2. Interacts with CUS2.

Its subcellular location is the nucleus. Its function is as follows. mRNA splicing factors, PRP9, PRP11, and PRP21, are necessary for addition of the U2 snRNP to the pre-mRNA in an early step of spliceosome assembly. The sequence is that of Pre-mRNA-splicing factor PRP11 (PRP11) from Saccharomyces cerevisiae (strain ATCC 204508 / S288c) (Baker's yeast).